The chain runs to 124 residues: MSEELPQIEIVQEGDNTTFAKPGDTVTIHYDGKLTNGKEFDSSRKRGKPFTCTVGVGQVIKGWDISLTNNYGKGGANLPKISKGTKAILTIPPNLAYGPRGIPPIIGPNETLVFEVELLGVNGQ.

Positions 23 to 122 (GDTVTIHYDG…VFEVELLGVN (100 aa)) constitute a PPIase FKBP-type domain.

The protein belongs to the FKBP-type PPIase family. FKBP1 subfamily.

It localises to the cytoplasm. The catalysed reaction is [protein]-peptidylproline (omega=180) = [protein]-peptidylproline (omega=0). With respect to regulation, inhibited by rapamycin. In terms of biological role, PPIases accelerate the folding of proteins. It catalyzes the cis-trans isomerization of proline imidic peptide bonds in oligopeptides. This is FK506-binding protein 1 (RBP1) from Candida albicans (strain SC5314 / ATCC MYA-2876) (Yeast).